The following is a 137-amino-acid chain: Proofreading thioesterase EntH (137 aa).

The active-site Nucleophile or proton acceptor is Glu-63.

It belongs to the thioesterase PaaI family. As to quaternary structure, homotetramer. Dimer of dimers. Interacts specifically with the aryl carrier protein (ArCP) domain of EntB.

The protein resides in the cytoplasm. Its pathway is siderophore biosynthesis; enterobactin biosynthesis. Its function is as follows. Required for optimal enterobactin synthesis. Acts as a proofreading enzyme that prevents EntB misacylation by hydrolyzing the thioester bound existing between EntB and wrongly charged molecules. The sequence is that of Proofreading thioesterase EntH from Enterobacter lignolyticus (strain SCF1).